The following is a 271-amino-acid chain: 3-methyl-2-oxobutanoate hydroxymethyltransferase (271 aa).

Asp50 and Asp89 together coordinate Mg(2+). 3-methyl-2-oxobutanoate contacts are provided by residues 50 to 51 (DS), Asp89, and Lys118. Position 120 (Glu120) interacts with Mg(2+). Glu187 acts as the Proton acceptor in catalysis.

The protein belongs to the PanB family. As to quaternary structure, homodecamer; pentamer of dimers. Mg(2+) serves as cofactor.

It localises to the cytoplasm. The catalysed reaction is 3-methyl-2-oxobutanoate + (6R)-5,10-methylene-5,6,7,8-tetrahydrofolate + H2O = 2-dehydropantoate + (6S)-5,6,7,8-tetrahydrofolate. Its pathway is cofactor biosynthesis; (R)-pantothenate biosynthesis; (R)-pantoate from 3-methyl-2-oxobutanoate: step 1/2. Functionally, catalyzes the reversible reaction in which hydroxymethyl group from 5,10-methylenetetrahydrofolate is transferred onto alpha-ketoisovalerate to form ketopantoate. This Campylobacter concisus (strain 13826) protein is 3-methyl-2-oxobutanoate hydroxymethyltransferase.